Reading from the N-terminus, the 567-residue chain is Urease subunit alpha (567 aa).

Residues 129–567 (GGVDTHIHFI…LPMAQRYFLF (439 aa)) enclose the Urease domain. Residues His-134, His-136, and Lys-217 each contribute to the Ni(2+) site. Lys-217 is modified (N6-carboxylysine). His-219 lines the substrate pocket. Residues His-246 and His-272 each coordinate Ni(2+). His-320 functions as the Proton donor in the catalytic mechanism. Asp-360 serves as a coordination point for Ni(2+).

This sequence belongs to the metallo-dependent hydrolases superfamily. Urease alpha subunit family. Heterotrimer of UreA (gamma), UreB (beta) and UreC (alpha) subunits. Three heterotrimers associate to form the active enzyme. It depends on Ni cation as a cofactor. Carboxylation allows a single lysine to coordinate two nickel ions.

The protein resides in the cytoplasm. It carries out the reaction urea + 2 H2O + H(+) = hydrogencarbonate + 2 NH4(+). Its pathway is nitrogen metabolism; urea degradation; CO(2) and NH(3) from urea (urease route): step 1/1. The polypeptide is Urease subunit alpha (Proteus hauseri).